We begin with the raw amino-acid sequence, 1117 residues long: PR domain zinc finger protein 10 (1117 aa).

Positions 97–142 (QQTPLGGLEAKEEEDEDEDEDTEEDEEEDGEDADLDDWEPDPPRPF) are disordered. Residues 107–136 (KEEEDEDEDEDTEEDEEEDGEDADLDDWEP) are compositionally biased toward acidic residues. One can recognise an SET domain in the interval 182–300 (LPLVLYIDRF…PKQELKVWYA (119 aa)). Residues 201–305 (IPKRTQLGPV…KVWYAASYAE (105 aa)) are N-terminal PR domain; essential for transcriptional activator activity. The C2H2-type 1 zinc-finger motif lies at 329-351 (WPCYECNRRFISSEQLQQHLNSH). Lys-354 participates in a covalent cross-link: Glycyl lysine isopeptide (Lys-Gly) (interchain with G-Cter in SUMO2). A compositionally biased stretch (basic residues) spans 361–381 (TRGRGRGRGKRRFGPGRRPGR). Residues 361-386 (TRGRGRGRGKRRFGPGRRPGRPPKFI) are disordered. Position 398 is a phosphoserine (Ser-398). Thr-402 is subject to Phosphothreonine. Residues 440–474 (QETQSSLEHEPETHTLHLQPQHEESVVPTQSTLTA) form a disordered region. Over residues 446–464 (LEHEPETHTLHLQPQHEES) the composition is skewed to basic and acidic residues. 9 consecutive C2H2-type zinc fingers follow at residues 500 to 522 (FKCL…LRFH), 530 to 552 (LTCD…MKLH), 558 to 580 (YSCI…VAIH), 586 to 609 (FTCP…RSFH), 614 to 636 (YQCT…MLRH), 642 to 665 (FLCS…QRMH), 697 to 720 (FKCR…SKRH), 742 to 765 (YFCQ…LKNH), and 804 to 827 (VCCP…RKKH). Positions 871–1097 (QAMTELSQTL…QTTSQQQTTQ (227 aa)) are C-terminal glutamine-rich region; essential for transcriptional activator activity. Disordered regions lie at residues 919-943 (VAPA…DPQP), 958-1001 (GQPL…SSVQ), and 1066-1094 (QTSA…SQQQ). The span at 924-934 (SPHQSQQSTVD) shows a compositional bias: polar residues.

This sequence belongs to the class V-like SAM-binding methyltransferase superfamily.

The protein localises to the nucleus. In terms of biological role, transcriptional activator, essential for early embryonic development and survival of embryonic stem cells (ESCs). Supports cell growth and survival during early development by transcriptionally activating the expression of the translation initiation factor EIF3B, to sustain global translation. Activates the transcription of FLNC. In Pongo abelii (Sumatran orangutan), this protein is PR domain zinc finger protein 10 (PRDM10).